The following is a 122-amino-acid chain: Class I hydrophobin 2 (122 aa).

The first 22 residues, 1-22, serve as a signal peptide directing secretion; the sequence is MFARVSTLFAMFFLGLALMVSA. 4 disulfide bridges follow: Cys40/Cys101, Cys47/Cys95, Cys48/Cys81, and Cys102/Cys115.

This sequence belongs to the fungal hydrophobin family. In terms of assembly, self-assembles to form functional amyloid fibrils called rodlets. Self-assembly into fibrillar rodlets occurs spontaneously at hydrophobic:hydrophilic interfaces and the rodlets further associate laterally to form amphipathic monolayers.

It localises to the secreted. Its subcellular location is the cell wall. Its function is as follows. Aerial growth, conidiation, and dispersal of filamentous fungi in the environment rely upon a capability of their secreting small amphipathic proteins called hydrophobins (HPBs) with low sequence identity. Class I can self-assemble into an outermost layer of rodlet bundles on aerial cell surfaces, conferring cellular hydrophobicity that supports fungal growth, development and dispersal; whereas Class II form highly ordered films at water-air interfaces through intermolecular interactions but contribute nothing to the rodlet structure. Hah2 is a class I hydrophobin that is involved in aerial growth of mycelia, but does not play a role in pathogenesis. The sequence is that of Class I hydrophobin 2 from Heterobasidion annosum (Root rot fungus).